Here is a 353-residue protein sequence, read N- to C-terminus: UDP-N-acetylglucosamine--N-acetylmuramyl-(pentapeptide) pyrophosphoryl-undecaprenol N-acetylglucosamine transferase (353 aa).

UDP-N-acetyl-alpha-D-glucosamine is bound by residues 10 to 12 (TGG), asparagine 124, serine 183, and glutamine 283.

This sequence belongs to the glycosyltransferase 28 family. MurG subfamily.

The protein resides in the cell inner membrane. The catalysed reaction is di-trans,octa-cis-undecaprenyl diphospho-N-acetyl-alpha-D-muramoyl-L-alanyl-D-glutamyl-meso-2,6-diaminopimeloyl-D-alanyl-D-alanine + UDP-N-acetyl-alpha-D-glucosamine = di-trans,octa-cis-undecaprenyl diphospho-[N-acetyl-alpha-D-glucosaminyl-(1-&gt;4)]-N-acetyl-alpha-D-muramoyl-L-alanyl-D-glutamyl-meso-2,6-diaminopimeloyl-D-alanyl-D-alanine + UDP + H(+). It functions in the pathway cell wall biogenesis; peptidoglycan biosynthesis. In terms of biological role, cell wall formation. Catalyzes the transfer of a GlcNAc subunit on undecaprenyl-pyrophosphoryl-MurNAc-pentapeptide (lipid intermediate I) to form undecaprenyl-pyrophosphoryl-MurNAc-(pentapeptide)GlcNAc (lipid intermediate II). The chain is UDP-N-acetylglucosamine--N-acetylmuramyl-(pentapeptide) pyrophosphoryl-undecaprenol N-acetylglucosamine transferase from Helicobacter pylori (strain ATCC 700392 / 26695) (Campylobacter pylori).